A 394-amino-acid chain; its full sequence is MAKAKFERTKPHVNIGTIGHVDHGKTSLTAAITIVLAKTGGAKATAYDQIDAAPEEKERGITISTAHVEYETKNRHYAHVDCPGHADYVKNMITGAAQMDGAILVVSAADGPMPQTREHILLAKQVGVPAMVVFLNKVDMVDDPDLLELVEMEVRELLSKYGFPGDEIPVIKGSALQALEGKPEGEKAINELMDAVDSYIPQPVRATDKPFLMPIEDVFSISGRGTVVTGRVESGIIKVGEEIEIVGLKDTQKTTCTGVEMFRKLLDEGQSGDNVGILLRGTKREEVERGQVLAKPGSIKPHDKFEAEVYVLSKEEGGRHTPFTNDYRPQFYFRTTDVTGTIKLPFDKQMVMPGDNATFTVELIKPIAMQEGLKFSIREGGRTVGAGVVTKINN.

In terms of domain architecture, tr-type G spans 10–204; that stretch reads KPHVNIGTIG…AVDSYIPQPV (195 aa). The interval 19–26 is G1; it reads GHVDHGKT. 19 to 26 serves as a coordination point for GTP; that stretch reads GHVDHGKT. Residue T26 coordinates Mg(2+). The tract at residues 60–64 is G2; sequence GITIS. Positions 81–84 are G3; that stretch reads DCPG. GTP-binding positions include 81–85 and 136–139; these read DCPGH and NKVD. A G4 region spans residues 136 to 139; it reads NKVD. The tract at residues 174 to 176 is G5; sequence SAL.

This sequence belongs to the TRAFAC class translation factor GTPase superfamily. Classic translation factor GTPase family. EF-Tu/EF-1A subfamily. In terms of assembly, monomer.

The protein resides in the cytoplasm. It catalyses the reaction GTP + H2O = GDP + phosphate + H(+). In terms of biological role, GTP hydrolase that promotes the GTP-dependent binding of aminoacyl-tRNA to the A-site of ribosomes during protein biosynthesis. This Rickettsia helvetica protein is Elongation factor Tu.